The primary structure comprises 354 residues: Heat-inducible transcription repressor HrcA (354 aa).

It belongs to the HrcA family.

Negative regulator of class I heat shock genes (grpE-dnaK-dnaJ and groELS operons). Prevents heat-shock induction of these operons. The protein is Heat-inducible transcription repressor HrcA of Novosphingobium aromaticivorans (strain ATCC 700278 / DSM 12444 / CCUG 56034 / CIP 105152 / NBRC 16084 / F199).